The sequence spans 123 residues: Ig heavy chain V region HPCM6 (123 aa).

Positions 1-114 (EVKLVESGGG…YPHWYFDVWG (114 aa)) constitute an Ig-like domain.

This Mus musculus (Mouse) protein is Ig heavy chain V region HPCM6.